The chain runs to 102 residues: Small ribosomal subunit protein bS6 (102 aa).

The protein belongs to the bacterial ribosomal protein bS6 family.

Binds together with bS18 to 16S ribosomal RNA. This chain is Small ribosomal subunit protein bS6, found in Solidesulfovibrio magneticus (strain ATCC 700980 / DSM 13731 / RS-1) (Desulfovibrio magneticus).